Here is a 421-residue protein sequence, read N- to C-terminus: Histidine--tRNA ligase (421 aa).

The protein belongs to the class-II aminoacyl-tRNA synthetase family. Homodimer.

The protein localises to the cytoplasm. The catalysed reaction is tRNA(His) + L-histidine + ATP = L-histidyl-tRNA(His) + AMP + diphosphate + H(+). The polypeptide is Histidine--tRNA ligase (Coxiella burnetii (strain CbuG_Q212) (Coxiella burnetii (strain Q212))).